Consider the following 130-residue polypeptide: Small ribosomal subunit protein uS8 (130 aa).

This sequence belongs to the universal ribosomal protein uS8 family. Part of the 30S ribosomal subunit. Contacts proteins S5 and S12.

Its function is as follows. One of the primary rRNA binding proteins, it binds directly to 16S rRNA central domain where it helps coordinate assembly of the platform of the 30S subunit. This Shewanella baltica (strain OS223) protein is Small ribosomal subunit protein uS8.